Here is a 65-residue protein sequence, read N- to C-terminus: Keratin-associated protein 20-2 (65 aa).

The protein belongs to the KRTAP type 20 family. In terms of assembly, interacts with hair keratins.

In terms of biological role, in the hair cortex, hair keratin intermediate filaments are embedded in an interfilamentous matrix, consisting of hair keratin-associated proteins (KRTAP), which are essential for the formation of a rigid and resistant hair shaft through their extensive disulfide bond cross-linking with abundant cysteine residues of hair keratins. The matrix proteins include the high-sulfur and high-glycine-tyrosine keratins. This chain is Keratin-associated protein 20-2 (KRTAP20-2), found in Homo sapiens (Human).